Consider the following 241-residue polypeptide: Zinc finger CCHC domain-containing protein 17 (241 aa).

The 73-residue stretch at 16–88 (YTIFQGEVAM…DRIKVSLSMK (73 aa)) folds into the S1 motif domain. Residue S114 is modified to Phosphoserine. A CCHC-type zinc finger spans residues 131–148 (TTCKKCGCKGHFAKDCFM). At K144 the chain carries N6-acetyllysine. The tract at residues 161 to 241 (EEEEKEEAKS…KKKHKKKHKE (81 aa)) is disordered. Residues 166–178 (EEAKSAEFEKPDP) show a composition bias toward basic and acidic residues. Residues 182-198 (PSRKRKKEKKKKKHRDR) show a composition bias toward basic residues. S183 is modified (phosphoserine). The segment covering 211 to 225 (DTGKRARHTSKDSKA) has biased composition (basic and acidic residues). The span at 226-241 (AKKKKKKKKHKKKHKE) shows a compositional bias: basic residues.

As to quaternary structure, interacts with PNN. Associates with the 60S ribosomal subunit.

It is found in the nucleus. It localises to the nucleolus. In Homo sapiens (Human), this protein is Zinc finger CCHC domain-containing protein 17 (ZCCHC17).